The chain runs to 205 residues: Gap junction epsilon-1 protein (205 aa).

Residues 1-23 (MSLNYIKNFYEGCVKPPTVIGQF) lie on the Cytoplasmic side of the membrane. A helical transmembrane segment spans residues 24 to 44 (HTLFFGSIRIFFLGVLGFAVY). The Extracellular segment spans residues 45–76 (GNEALHFICDPDKREVNLFCYNQFRPITPQVS). Disulfide bonds link cysteine 53–cysteine 161 and cysteine 64–cysteine 148. Residues 77–97 (FSALQLVIVLVPGALFHLYAA) traverse the membrane as a helical segment. Over 98–112 (CKSINQECILQKPIY) the chain is Cytoplasmic. A helical transmembrane segment spans residues 113 to 133 (TIIYILSVLLRISLAAIAFWL). The Extracellular portion of the chain corresponds to 134 to 170 (QIYLFGFQVKSLYLCDARSLGENMIIRCMVPEHFEKT). The helical transmembrane segment at 171 to 191 (IFLIAINTFTTITILLFVAEI) threads the bilayer. The Cytoplasmic portion of the chain corresponds to 192–205 (FEIIFRRLYFPFRQ).

This sequence belongs to the connexin family. Beta-type (group I) subfamily. As to quaternary structure, a connexon is composed of a hexamer of connexins. As to expression, not detected in lens or retina.

It is found in the cell membrane. Functionally, mediates calcium-independent ATP release, suggesting activity as a hemichannel. Does not form functional gap junctions. The protein is Gap junction epsilon-1 protein (GJE1) of Homo sapiens (Human).